The primary structure comprises 245 residues: Eukaryotic translation initiation factor 6 (245 aa).

This sequence belongs to the eIF-6 family. As to quaternary structure, monomer. Associates with the 60S ribosomal subunit.

It localises to the cytoplasm. It is found in the nucleus. The protein resides in the nucleolus. Its function is as follows. Binds to the 60S ribosomal subunit and prevents its association with the 40S ribosomal subunit to form the 80S initiation complex in the cytoplasm. May also be involved in ribosome biogenesis. This is Eukaryotic translation initiation factor 6 (eif6) from Danio rerio (Zebrafish).